The sequence spans 182 residues: MKNSIIKSAITCLLLLSPSTFAATDIIGGEMEFKGVVVAHGCTIVAGDENKVIDFKQISAKDLYSLQKSNPVAFSISLENCSQDIYKSVTITLDGQAHSTMPNHIAVTGSGSEDPKSIGIAFTDKAHNIIELKKPSAPQQLNNKRVQFNFMAYVEATSSAIQNQTILTGPFQAQATYTLNYQ.

Residues 1–22 form the signal peptide; that stretch reads MKNSIIKSAITCLLLLSPSTFA.

This sequence belongs to the fimbrial protein family.

The protein resides in the fimbrium. The chain is Putative minor fimbrial subunit PmfF (pmfF) from Proteus mirabilis (strain HI4320).